We begin with the raw amino-acid sequence, 94 residues long: Beta-defensin 132 (94 aa).

Residues 1–22 (MKFLLLVLAALGFLTQVIPASA) form the signal peptide. Cystine bridges form between cysteine 27–cysteine 55 and cysteine 39–cysteine 56. The interval 72–94 (GNHWQSRRNTQRKDKKQQTTVTS) is disordered. Residues 76 to 86 (QSRRNTQRKDK) are compositionally biased toward basic residues.

This sequence belongs to the beta-defensin family.

The protein localises to the secreted. Its function is as follows. Has antibacterial activity. The polypeptide is Beta-defensin 132 (DEFB132) (Gorilla gorilla gorilla (Western lowland gorilla)).